Reading from the N-terminus, the 137-residue chain is MLQPKKTKFRKQFKGRISGAAKGGFELNFGQFGLKCLEPERITARQIEAARRAITREMKRQGRVWIRVFPDLPVTAKPTEVRMGSGKGAPEYWAARVHPGRIMFEVDGVAEDIAREALRLGAAKLPVRTRVIQRIAD.

The protein belongs to the universal ribosomal protein uL16 family. In terms of assembly, part of the 50S ribosomal subunit.

In terms of biological role, binds 23S rRNA and is also seen to make contacts with the A and possibly P site tRNAs. The chain is Large ribosomal subunit protein uL16 from Methylorubrum extorquens (strain CM4 / NCIMB 13688) (Methylobacterium extorquens).